A 301-amino-acid chain; its full sequence is Putative MgpC-like protein MPN_093 (301 aa).

The protein belongs to the MgpC family.

The polypeptide is Putative MgpC-like protein MPN_093 (Mycoplasma pneumoniae (strain ATCC 29342 / M129 / Subtype 1) (Mycoplasmoides pneumoniae)).